The primary structure comprises 230 residues: 2,3-bisphosphoglycerate-dependent phosphoglycerate mutase (230 aa).

Residues 8 to 15 (RHGESEWN), 21 to 22 (TG), Arg60, 87 to 90 (ERHY), Lys98, 114 to 115 (RR), and 183 to 184 (GN) contribute to the substrate site. His9 functions as the Tele-phosphohistidine intermediate in the catalytic mechanism. Glu87 functions as the Proton donor/acceptor in the catalytic mechanism.

Belongs to the phosphoglycerate mutase family. BPG-dependent PGAM subfamily.

The enzyme catalyses (2R)-2-phosphoglycerate = (2R)-3-phosphoglycerate. It participates in carbohydrate degradation; glycolysis; pyruvate from D-glyceraldehyde 3-phosphate: step 3/5. Catalyzes the interconversion of 2-phosphoglycerate and 3-phosphoglycerate. In Streptococcus sanguinis (strain SK36), this protein is 2,3-bisphosphoglycerate-dependent phosphoglycerate mutase.